A 277-amino-acid polypeptide reads, in one-letter code: Formamidopyrimidine-DNA glycosylase (277 aa).

The Schiff-base intermediate with DNA role is filled by proline 2. Glutamate 3 functions as the Proton donor in the catalytic mechanism. Lysine 60 serves as the catalytic Proton donor; for beta-elimination activity. Positions 94, 113, and 158 each coordinate DNA. The FPG-type zinc finger occupies 243-277 (WVYNRAGEPCKVCGDVIQRIKLGGRSSHFCRQCQV). Arginine 267 (proton donor; for delta-elimination activity) is an active-site residue.

Belongs to the FPG family. Monomer. The cofactor is Zn(2+).

It catalyses the reaction Hydrolysis of DNA containing ring-opened 7-methylguanine residues, releasing 2,6-diamino-4-hydroxy-5-(N-methyl)formamidopyrimidine.. It carries out the reaction 2'-deoxyribonucleotide-(2'-deoxyribose 5'-phosphate)-2'-deoxyribonucleotide-DNA = a 3'-end 2'-deoxyribonucleotide-(2,3-dehydro-2,3-deoxyribose 5'-phosphate)-DNA + a 5'-end 5'-phospho-2'-deoxyribonucleoside-DNA + H(+). Involved in base excision repair of DNA damaged by oxidation or by mutagenic agents. Acts as a DNA glycosylase that recognizes and removes damaged bases. Has a preference for oxidized purines, such as 7,8-dihydro-8-oxoguanine (8-oxoG). Has AP (apurinic/apyrimidinic) lyase activity and introduces nicks in the DNA strand. Cleaves the DNA backbone by beta-delta elimination to generate a single-strand break at the site of the removed base with both 3'- and 5'-phosphates. In Trichormus variabilis (strain ATCC 29413 / PCC 7937) (Anabaena variabilis), this protein is Formamidopyrimidine-DNA glycosylase.